A 139-amino-acid chain; its full sequence is Protein archease (139 aa).

Ca(2+) is bound by residues Asp-12, Asp-138, and Ile-139.

Belongs to the archease family.

Its function is as follows. Activates the tRNA-splicing ligase complex by facilitating the enzymatic turnover of catalytic subunit RtcB. Acts by promoting the guanylylation of RtcB, a key intermediate step in tRNA ligation. Can also alter the NTP specificity of RtcB such that ATP, dGTP or ITP is used efficiently. The polypeptide is Protein archease (Sulfolobus acidocaldarius (strain ATCC 33909 / DSM 639 / JCM 8929 / NBRC 15157 / NCIMB 11770)).